The following is a 406-amino-acid chain: Outer membrane protein assembly factor BamB (406 aa).

The first 23 residues, Met-1–Gly-23, serve as a signal peptide directing secretion. Cys-24 carries the N-palmitoyl cysteine lipid modification. Residue Cys-24 is the site of S-diacylglycerol cysteine attachment.

It belongs to the BamB family. Part of the Bam complex.

It is found in the cell outer membrane. In terms of biological role, part of the outer membrane protein assembly complex, which is involved in assembly and insertion of beta-barrel proteins into the outer membrane. In Xanthomonas campestris pv. campestris (strain ATCC 33913 / DSM 3586 / NCPPB 528 / LMG 568 / P 25), this protein is Outer membrane protein assembly factor BamB.